Reading from the N-terminus, the 637-residue chain is Chaperone protein DnaK (637 aa).

Thr196 carries the post-translational modification Phosphothreonine; by autocatalysis. Disordered stretches follow at residues 503-525 (AEIN…RKEE) and 598-637 (SGAG…DDKK). Over residues 598–619 (SGAGAAQAQPEAPQNSGSSQSS) the composition is skewed to low complexity.

Belongs to the heat shock protein 70 family.

Functionally, acts as a chaperone. In Chlorobium chlorochromatii (strain CaD3), this protein is Chaperone protein DnaK.